Consider the following 250-residue polypeptide: Probable transcriptional regulatory protein SCO1521 (250 aa).

The protein belongs to the TACO1 family.

The protein localises to the cytoplasm. This is Probable transcriptional regulatory protein SCO1521 from Streptomyces coelicolor (strain ATCC BAA-471 / A3(2) / M145).